The following is a 142-amino-acid chain: Large ribosomal subunit protein uL13 (142 aa).

The protein belongs to the universal ribosomal protein uL13 family. In terms of assembly, part of the 50S ribosomal subunit.

Functionally, this protein is one of the early assembly proteins of the 50S ribosomal subunit, although it is not seen to bind rRNA by itself. It is important during the early stages of 50S assembly. The sequence is that of Large ribosomal subunit protein uL13 from Aliivibrio salmonicida (strain LFI1238) (Vibrio salmonicida (strain LFI1238)).